Here is a 116-residue protein sequence, read N- to C-terminus: Large ribosomal subunit protein uL18 (116 aa).

Belongs to the universal ribosomal protein uL18 family. Part of the 50S ribosomal subunit; part of the 5S rRNA/L5/L18/L25 subcomplex. Contacts the 5S and 23S rRNAs.

Functionally, this is one of the proteins that bind and probably mediate the attachment of the 5S RNA into the large ribosomal subunit, where it forms part of the central protuberance. The protein is Large ribosomal subunit protein uL18 of Teredinibacter turnerae (strain ATCC 39867 / T7901).